Consider the following 63-residue polypeptide: SPbeta prophage-derived uncharacterized protein YomP (63 aa).

The chain is SPbeta prophage-derived uncharacterized protein YomP (yomP) from Bacillus subtilis (strain 168).